Reading from the N-terminus, the 1185-residue chain is Pyruvate carboxylase (1185 aa).

The Biotin carboxylation domain maps to 32-484 (KFTKVLVANR…WTTFIDDTPE (453 aa)). Positions 150, 234, and 269 each coordinate ATP. Residues 154–351 (RAIAIRCGVP…IVSAQLHVAA (198 aa)) form the ATP-grasp domain. Residue Arg326 is part of the active site. The Pyruvate carboxyltransferase domain maps to 570–838 (GLIMDTTWRD…QLEFDNNQLR (269 aa)). Residues 578-582 (RDAHQ) and Arg651 contribute to the substrate site. A divalent metal cation is bound at residue Asp579. The a divalent metal cation site is built by Lys747, His777, and His779. Lys747 is subject to N6-carboxylysine. Thr912 is a substrate binding site. Residues 1108-1183 (RADPGNPGHV…NGGDLCAVLE (76 aa)) form the Biotinyl-binding domain. Lys1149 bears the N6-biotinyllysine mark.

It depends on biotin as a cofactor. The cofactor is Zn(2+).

Its subcellular location is the cytoplasm. The enzyme catalyses hydrogencarbonate + pyruvate + ATP = oxaloacetate + ADP + phosphate + H(+). The protein operates within carbohydrate biosynthesis; gluconeogenesis. Its function is as follows. Pyruvate carboxylase catalyzes a 2-step reaction, involving the ATP-dependent carboxylation of the covalently attached biotin in the first step and the transfer of the carboxyl group to pyruvate in the second. The chain is Pyruvate carboxylase (pyr1) from Schizosaccharomyces pombe (strain 972 / ATCC 24843) (Fission yeast).